The sequence spans 172 residues: uncharacterized protein (172 aa).

Residues 109-129 form a helical membrane-spanning segment; sequence MLLLYLYYNLLLLTASTPLTF.

Its subcellular location is the membrane. This is an uncharacterized protein from Saccharomyces cerevisiae (strain ATCC 204508 / S288c) (Baker's yeast).